The primary structure comprises 212 residues: MSQDFVIEAFPRDDQGKGASRRLRREERKIPAIIYGGGKDATPVAIWHNELKKAIENEAFFSHILTVDIQGKKESVILKDLQRHPYKPILTHADFLRVDKDHEIHVNVPLHFINEDTAPAVKLQGGIVSHTMTEVEVICLPQNLPEFIEVDLNEVEMDQVVHLSDLKLPKGVKVAALQQGEDHDLPVASIHKPKGAKADDAEGEEGEEGGEE.

Positions histidine 183–glutamate 212 are disordered. Residues alanine 201–glutamate 212 are compositionally biased toward acidic residues.

Belongs to the bacterial ribosomal protein bL25 family. CTC subfamily. Part of the 50S ribosomal subunit; part of the 5S rRNA/L5/L18/L25 subcomplex. Contacts the 5S rRNA. Binds to the 5S rRNA independently of L5 and L18.

Its function is as follows. This is one of the proteins that binds to the 5S RNA in the ribosome where it forms part of the central protuberance. This is Large ribosomal subunit protein bL25 from Marinobacter nauticus (strain ATCC 700491 / DSM 11845 / VT8) (Marinobacter aquaeolei).